The chain runs to 187 residues: DNA-directed RNA polymerase subunit Rpo7 (187 aa).

The S1 motif domain occupies 82 to 166 (YELIEGEVVD…RGSKIALTMR (85 aa)).

It belongs to the eukaryotic RPB7/RPC8 RNA polymerase subunit family. In terms of assembly, part of the RNA polymerase complex. Forms a stalk with Rpo4 that extends from the main structure.

The protein localises to the cytoplasm. It carries out the reaction RNA(n) + a ribonucleoside 5'-triphosphate = RNA(n+1) + diphosphate. In terms of biological role, DNA-dependent RNA polymerase (RNAP) catalyzes the transcription of DNA into RNA using the four ribonucleoside triphosphates as substrates. In Methanocaldococcus jannaschii (strain ATCC 43067 / DSM 2661 / JAL-1 / JCM 10045 / NBRC 100440) (Methanococcus jannaschii), this protein is DNA-directed RNA polymerase subunit Rpo7.